The sequence spans 335 residues: N-acetyl-gamma-glutamyl-phosphate reductase (335 aa).

The active site involves Cys155.

The protein belongs to the NAGSA dehydrogenase family. Type 1 subfamily.

The protein localises to the cytoplasm. The enzyme catalyses N-acetyl-L-glutamate 5-semialdehyde + phosphate + NADP(+) = N-acetyl-L-glutamyl 5-phosphate + NADPH + H(+). The protein operates within amino-acid biosynthesis; L-arginine biosynthesis; N(2)-acetyl-L-ornithine from L-glutamate: step 3/4. Its function is as follows. Catalyzes the NADPH-dependent reduction of N-acetyl-5-glutamyl phosphate to yield N-acetyl-L-glutamate 5-semialdehyde. The sequence is that of N-acetyl-gamma-glutamyl-phosphate reductase from Pasteurella multocida (strain Pm70).